Consider the following 1157-residue polypeptide: Endo-1,4-beta-xylanase A (1157 aa).

The signal sequence occupies residues 1–33 (MMKNNVDRIVSIVTALIMIFGASLFSPPIRVFA). CBM-cenC domains lie at 38–189 (INLV…VTTQ) and 195–343 (GNVI…VIGE). Residues 352 to 675 (QNDIPDLYSV…KPAFWAVVDP (324 aa)) enclose the GH10 domain. The active-site Proton donor is the Glu-495. Asp-537 is a catalytic residue. The active-site Nucleophile is Glu-600. SLH domains lie at 1051 to 1114 (KKGV…YSGE) and 1115 to 1157 (FSDV…EMTQ).

It belongs to the glycosyl hydrolase 10 (cellulase F) family.

The catalysed reaction is Endohydrolysis of (1-&gt;4)-beta-D-xylosidic linkages in xylans.. It participates in glycan degradation; xylan degradation. Its function is as follows. Endo-acting enzyme that randomly cleaves the internal xylosidic linkages of the xylan backbone, yielding xylooligosaccharides of various lengths which are further hydrolyzed to xylose molecules by beta-xylosidase (EC 3.2.1.37). Requires at least three xylose residues for catalytic activity. Does not have activity against xylobiose. This chain is Endo-1,4-beta-xylanase A (xynA), found in Thermoanaerobacterium saccharolyticum.